A 199-amino-acid polypeptide reads, in one-letter code: ATP synthase subunit a (199 aa).

6 consecutive transmembrane segments (helical) span residues 2-22, 25-45, 53-73, 80-100, 143-163, and 164-184; these read TNVY…LFYF, SMLG…FSYT, VISV…YFMY, MIEF…LTFI, VNVL…ELYL, and GIFY…VFFI.

Belongs to the ATPase A chain family. As to quaternary structure, F-type ATPases have 2 components, CF(1) - the catalytic core - and CF(0) - the membrane proton channel. CF(1) has five subunits: alpha(3), beta(3), gamma(1), delta(1), epsilon(1). CF(0) has three main subunits: a, b and c.

The protein resides in the mitochondrion inner membrane. Its function is as follows. Mitochondrial membrane ATP synthase (F(1)F(0) ATP synthase or Complex V) produces ATP from ADP in the presence of a proton gradient across the membrane which is generated by electron transport complexes of the respiratory chain. F-type ATPases consist of two structural domains, F(1) - containing the extramembraneous catalytic core and F(0) - containing the membrane proton channel, linked together by a central stalk and a peripheral stalk. During catalysis, ATP synthesis in the catalytic domain of F(1) is coupled via a rotary mechanism of the central stalk subunits to proton translocation. Key component of the proton channel; it may play a direct role in the translocation of protons across the membrane. In Ascaris suum (Pig roundworm), this protein is ATP synthase subunit a (ATP6).